Consider the following 482-residue polypeptide: Cysteine--tRNA ligase (482 aa).

Residue Cys28 coordinates Zn(2+). The 'HIGH' region signature appears at 30–40 (PTVYNFLHVGN). 3 residues coordinate Zn(2+): Cys208, His233, and Glu237. A 'KMSKS' region motif is present at residues 265–269 (KMSKS). Residue Lys268 participates in ATP binding.

The protein belongs to the class-I aminoacyl-tRNA synthetase family. In terms of assembly, monomer. Zn(2+) serves as cofactor.

It localises to the cytoplasm. It carries out the reaction tRNA(Cys) + L-cysteine + ATP = L-cysteinyl-tRNA(Cys) + AMP + diphosphate. The chain is Cysteine--tRNA ligase from Bdellovibrio bacteriovorus (strain ATCC 15356 / DSM 50701 / NCIMB 9529 / HD100).